Here is a 506-residue protein sequence, read N- to C-terminus: Probable Xaa-Pro aminopeptidase BDCG_04966 (506 aa).

Mn(2+) is bound by residues Asp285, Asp296, Glu433, and Glu471.

The protein belongs to the peptidase M24B family. The cofactor is Mn(2+).

It carries out the reaction Release of any N-terminal amino acid, including proline, that is linked to proline, even from a dipeptide or tripeptide.. In terms of biological role, catalyzes the removal of a penultimate prolyl residue from the N-termini of peptides. The protein is Probable Xaa-Pro aminopeptidase BDCG_04966 of Ajellomyces dermatitidis (strain ER-3 / ATCC MYA-2586) (Blastomyces dermatitidis).